Reading from the N-terminus, the 366-residue chain is Neuropeptide Y receptor type 1 (366 aa).

Topologically, residues 1–39 (MNFSTYFENLSVPNNISGNITFPISEDCALPLPMIFTLA) are extracellular. 3 N-linked (GlcNAc...) asparagine glycosylation sites follow: N2, N9, and N15. Residues 40–60 (LAYGAVIILGLSGNLALIIII) form a helical membrane-spanning segment. Topologically, residues 61–82 (LKQKEMRNVTNILIVNLSFSDL) are cytoplasmic. Residues 83-103 (LATIMCLPFTLIYTLMDHWIF) form a helical membrane-spanning segment. The Extracellular portion of the chain corresponds to 104 to 111 (GEVMCKLN). The cysteines at positions 108 and 193 are disulfide-linked. A helical transmembrane segment spans residues 112 to 132 (EYIQCVSVTVSIFSLVLIAIE). Topologically, residues 133–149 (RHQLIINPRGWRPNNRH) are cytoplasmic. A helical membrane pass occupies residues 150–170 (ACFGITVIWGFAMACSTPLMM). The Extracellular segment spans residues 171–203 (YSVLTDEPFKNISLDSYIGKYVCLEDFPEDKFR). N181 is a glycosylation site (N-linked (GlcNAc...) asparagine). The helical transmembrane segment at 204-224 (LSYTTLLFILQYLGPLCFIFV) threads the bilayer. Topologically, residues 225 to 260 (CYTKIFLRLKRRNNMMDKIRDNKYRSSETKRINIML) are cytoplasmic. A helical transmembrane segment spans residues 261 to 281 (LSIVVGFALCWLPFFIFNLVF). The Extracellular portion of the chain corresponds to 282 to 294 (DWNHEAVATCNHN). A helical membrane pass occupies residues 295 to 315 (LLFLICHLTAMISTCVNPIFY). Over 316–366 (GFLNKNFQRDLQFFFNFCDFRSREDDYETIAMSTMHTDVSKTSLKQASPIA) the chain is Cytoplasmic. A lipid anchor (S-palmitoyl cysteine) is attached at C333.

This sequence belongs to the G-protein coupled receptor 1 family.

The protein resides in the cell membrane. In terms of biological role, receptor for neuropeptide Y and peptide YY. This chain is Neuropeptide Y receptor type 1 (npy1r), found in Xenopus laevis (African clawed frog).